The following is a 70-amino-acid chain: Cuticle protein 16 isoform b (70 aa).

The chain is Cuticle protein 16 isoform b from Limulus polyphemus (Atlantic horseshoe crab).